The primary structure comprises 228 residues: Glycerol-3-phosphate acyltransferase (228 aa).

The next 6 membrane-spanning stretches (helical) occupy residues 1 to 21, 56 to 76, 104 to 124, 136 to 156, 161 to 181, and 183 to 203; these read MINW…LGAT, VPAL…IALV, MVII…WIGF, ILLA…IVVL, IVSL…FFTG, and PLPY…RHIS.

Belongs to the PlsY family. In terms of assembly, probably interacts with PlsX.

It localises to the cell inner membrane. It catalyses the reaction an acyl phosphate + sn-glycerol 3-phosphate = a 1-acyl-sn-glycero-3-phosphate + phosphate. The protein operates within lipid metabolism; phospholipid metabolism. Catalyzes the transfer of an acyl group from acyl-phosphate (acyl-PO(4)) to glycerol-3-phosphate (G3P) to form lysophosphatidic acid (LPA). This enzyme utilizes acyl-phosphate as fatty acyl donor, but not acyl-CoA or acyl-ACP. In Trichodesmium erythraeum (strain IMS101), this protein is Glycerol-3-phosphate acyltransferase.